Here is a 193-residue protein sequence, read N- to C-terminus: Superoxide dismutase [Fe] (193 aa).

Fe cation-binding residues include H27, H74, D157, and H161.

This sequence belongs to the iron/manganese superoxide dismutase family. In terms of assembly, monomer. It depends on Fe cation as a cofactor.

The enzyme catalyses 2 superoxide + 2 H(+) = H2O2 + O2. In terms of biological role, destroys superoxide anion radicals which are normally produced within the cells and which are toxic to biological systems. Involved in the metabolism of 4-aminophenol. May have an indirect role in hydroxyquinol metabolism by scavenging and detoxifying reactive species that promote its auto-oxidation. The polypeptide is Superoxide dismutase [Fe] (Burkholderia sp).